We begin with the raw amino-acid sequence, 435 residues long: Manganese transport system membrane protein MntC (435 aa).

Helical transmembrane passes span 17–37 (VLAG…FVLL), 42–62 (LIGD…FLFT), 68–88 (PFFL…IQLI), 98–118 (SAIG…LTYI), 143–163 (QDII…IVFF), 166–186 (FTLI…VRFL), 189–209 (LLAC…GVIL), 228–248 (LTGM…AGTL), and 255–275 (GMAT…FSMI).

This sequence belongs to the ABC-3 integral membrane protein family. As to quaternary structure, the complex is probably composed of two ATP-binding proteins (MntB), two transmembrane proteins (MntC and MntD) and a solute-binding protein (MntA).

The protein localises to the cell membrane. Its function is as follows. Probably part of the ABC transporter complex MntABCD involved in manganese import. Probably responsible for the translocation of the substrate across the membrane. In Bacillus subtilis (strain 168), this protein is Manganese transport system membrane protein MntC.